Consider the following 370-residue polypeptide: Transcription factor E2F2 (370 aa).

The disordered stretch occupies residues 1-73 (MYKRKTASIV…QSQSQPGQQR (73 aa)). A compositionally biased stretch (low complexity) spans 15-26 (SAAGTTSSAMMM). The span at 31–49 (AETSVRSQSYESTPVSMDT) shows a compositional bias: polar residues. The span at 59-73 (SPSNSQSQSQPGQQR) shows a compositional bias: low complexity. The DNA-binding element occupies 72 to 137 (QRSVGSLVLL…GRHCSLVRWR (66 aa)). A dimerization region spans residues 137–226 (RGGGFNNAKD…VDIKRNHYEL (90 aa)).

It belongs to the E2F/DP family. Forms a heterodimer with Dp. Interacts with Rbf/Rbf1 and Rbf2. Component of the DREAM complex, which is at least composed of Myb, Caf1-55, mip40, mip120, mip130, E2f2, Dp, Rbf, Rbf2, lin-52, HDAC1/Rpd3 and l(3)mbt. As to expression, ubiquitously expressed in eye disk.

It localises to the nucleus. Its function is as follows. Transcriptional repressor that binds to E2f sites and represses E2f-regulated target genes. Binding to E2f sites requires transcription factor Dp. Acts synergistically with Rbf2 to antagonize E2f1-mediated transcriptional activation. Component of the DREAM complex, a multiprotein complex that can both act as a transcription activator or repressor depending on the context. The DREAM complex is required for recruiting E2f2 at differentiation-specific promoters and for stabilizing E2f2-Rbf complexes during S phase. During development, the complex represses transcription of developmentally controlled E2f target genes. During oogenesis, plays a role in restricting DNA synthesis to sites of chorion gene amplification in late stage ovarian follicle cells. Plays an inhibitory role in ionizing radiation (IR)-induced p53-independent apoptosis. May be involved in cell cycle exit by temporarily limiting CycE-dependent activation of E2f-regulated transcription. The protein is Transcription factor E2F2 (E2f2) of Drosophila melanogaster (Fruit fly).